Here is a 308-residue protein sequence, read N- to C-terminus: Mitochondrial import receptor subunit TOM40B (308 aa).

The tract at residues 1-29 (MGNTLGLAPMGTLPRRSPRREEPLPNPGS) is disordered. The interval 281-308 (PLPVTLALGAFLNHWRNRFHCGFSITVG) is required for mitochondrial targeting.

This sequence belongs to the Tom40 family. As to quaternary structure, forms part of the preprotein translocase of the outer mitochondrial membrane (TOM complex) containing TOMM22, TOMM40, TOMM40L and TOMM70. Interacts with mitochondrial targeting sequences.

Its subcellular location is the mitochondrion outer membrane. Functionally, potential channel-forming protein implicated in import of protein precursors into mitochondria. The sequence is that of Mitochondrial import receptor subunit TOM40B (TOMM40L) from Homo sapiens (Human).